The sequence spans 127 residues: Small ribosomal subunit protein uS11 (127 aa).

This sequence belongs to the universal ribosomal protein uS11 family. In terms of assembly, part of the 30S ribosomal subunit. Interacts with proteins S7 and S18. Binds to IF-3.

Functionally, located on the platform of the 30S subunit, it bridges several disparate RNA helices of the 16S rRNA. Forms part of the Shine-Dalgarno cleft in the 70S ribosome. This Streptococcus mutans serotype c (strain ATCC 700610 / UA159) protein is Small ribosomal subunit protein uS11.